The chain runs to 988 residues: Vacuolar sorting protein 18 (988 aa).

The stretch at asparagine 589–arginine 749 is one CHCR repeat. Residues lysine 785–aspartate 819 adopt a coiled-coil conformation. An RING-type; degenerate zinc finger spans residues cysteine 836–cysteine 886.

Belongs to the VPS18 family. Core component of at least two putative endosomal tethering complexes, the homotypic fusion and vacuole protein sorting (HOPS) complex and the class C core vacuole/endosome tethering (CORVET) complex. Their common core is composed of the class C Vps proteins VPS11, VCL1, VPS18 and VPS33, which in HOPS further associates with VPS39 and VPS41 and in CORVET with VPS3.

The protein resides in the endosome membrane. The protein localises to the vacuole membrane. Its subcellular location is the cytoplasm. Essential protein required during embryogenesis. Believed to act as a core component of the putative HOPS endosomal tethering complex and of the class C core vacuole/endosome tethering (CORVET) complex. CORVET is required for vacuolar transport of SYP22. HOPS is required for the central vacuole formation. Involved in root development. Plays a role in vesicle-mediated protein trafficking to lysosomal compartments including the endocytic membrane transport pathways. This Arabidopsis thaliana (Mouse-ear cress) protein is Vacuolar sorting protein 18.